The chain runs to 297 residues: MSLKPYATPTYWQRVKVAFQYIFPQLPVTRLAGWLAEQKWGAVTHFIIRTFAKQYKVNLSEAQKSNASDYATFNEFFIRPLKENARPINQDAQALCLPADGKVSESGKIEDDRLLQAKGHFFTLETLLANDQEMANKFKDGHFITTYLSPRDYHRVHMPCDATLRKMIYVPGELFSVNPFLAEHVPNLFARNERVICEFETEFGPMVQILVGATITASMSTVWAGIINPPRTKEVVEYHYETSGETAVHLKKGQEMGAFRLGSTVINLFPKDSVEFEAHLQAGVETRMGERLAKIVK.

Catalysis depends on charge relay system; for autoendoproteolytic cleavage activity residues D100, H157, and S263. S263 acts as the Schiff-base intermediate with substrate; via pyruvic acid; for decarboxylase activity in catalysis. S263 is modified (pyruvic acid (Ser); by autocatalysis).

Belongs to the phosphatidylserine decarboxylase family. PSD-B subfamily. Prokaryotic type I sub-subfamily. Heterodimer of a large membrane-associated beta subunit and a small pyruvoyl-containing alpha subunit. Requires pyruvate as cofactor. In terms of processing, is synthesized initially as an inactive proenzyme. Formation of the active enzyme involves a self-maturation process in which the active site pyruvoyl group is generated from an internal serine residue via an autocatalytic post-translational modification. Two non-identical subunits are generated from the proenzyme in this reaction, and the pyruvate is formed at the N-terminus of the alpha chain, which is derived from the carboxyl end of the proenzyme. The autoendoproteolytic cleavage occurs by a canonical serine protease mechanism, in which the side chain hydroxyl group of the serine supplies its oxygen atom to form the C-terminus of the beta chain, while the remainder of the serine residue undergoes an oxidative deamination to produce ammonia and the pyruvoyl prosthetic group on the alpha chain. During this reaction, the Ser that is part of the protease active site of the proenzyme becomes the pyruvoyl prosthetic group, which constitutes an essential element of the active site of the mature decarboxylase.

The protein localises to the cell membrane. The catalysed reaction is a 1,2-diacyl-sn-glycero-3-phospho-L-serine + H(+) = a 1,2-diacyl-sn-glycero-3-phosphoethanolamine + CO2. It functions in the pathway phospholipid metabolism; phosphatidylethanolamine biosynthesis; phosphatidylethanolamine from CDP-diacylglycerol: step 2/2. Functionally, catalyzes the formation of phosphatidylethanolamine (PtdEtn) from phosphatidylserine (PtdSer). This chain is Phosphatidylserine decarboxylase proenzyme, found in Actinobacillus pleuropneumoniae serotype 5b (strain L20).